The following is a 507-amino-acid chain: Aromatase (507 aa).

Heme is bound at residue cysteine 436.

It belongs to the cytochrome P450 family. The cofactor is heme.

It is found in the membrane. It carries out the reaction testosterone + 3 reduced [NADPH--hemoprotein reductase] + 3 O2 = 17beta-estradiol + formate + 3 oxidized [NADPH--hemoprotein reductase] + 4 H2O + 4 H(+). The catalysed reaction is androst-4-ene-3,17-dione + 3 reduced [NADPH--hemoprotein reductase] + 3 O2 = estrone + formate + 3 oxidized [NADPH--hemoprotein reductase] + 4 H2O + 4 H(+). Functionally, catalyzes the formation of aromatic C18 estrogens from C19 androgens. The sequence is that of Aromatase (CYP19A1) from Gallus gallus (Chicken).